A 3214-amino-acid chain; its full sequence is Ciliogenesis and planar polarity effector 1 (3214 aa).

The next 2 membrane-spanning stretches (helical) occupy residues 593–613 (KLML…LQFI) and 632–652 (AWVL…YWDM). 11 disordered regions span residues 1496–1523 (VGKK…ETPG), 1644–1667 (GNQS…PLQS), 1879–1991 (DGRH…HRAQ), 2047–2142 (FGES…FPPA), 2214–2241 (SLSD…SSHC), 2398–2440 (GITQ…ISND), 2491–2529 (GSHD…GHEP), 2622–2650 (TFQS…QSGE), 2824–2855 (VSLQ…HSSQ), 3037–3127 (TAPA…CRED), and 3158–3181 (MSPA…VSES). The segment covering 1512–1523 (NSQRKEDDETPG) has biased composition (basic and acidic residues). The segment covering 1932 to 1942 (QCSRKEPRDAS) has biased composition (basic and acidic residues). Composition is skewed to polar residues over residues 1943 to 1953 (VDTNLTEQKGA), 1971 to 1984 (NGAQ…QKTQ), and 2047 to 2068 (FGES…SRQR). Residues 2079–2099 (CTREPGKNSPADHKRISRPDQ) show a composition bias toward basic and acidic residues. The span at 2215 to 2241 (LSDSCQPPVSQRTVHTTLPSPSDSSHC) shows a compositional bias: polar residues. Residues 2500–2514 (DPDKEGPSQKADSES) show a composition bias toward basic and acidic residues. Composition is skewed to polar residues over residues 2515–2524 (SKNPQATAAS) and 2622–2634 (TFQS…STRG). Positions 2830–2848 (EDVEEQKDAEETSETEFSE) are enriched in acidic residues. The segment covering 3090-3107 (RGSSQLRGSQPPCQSQKP) has biased composition (polar residues).

As to quaternary structure, interacts with FUZ; INTU and WDPCP; the interactors are proposed to form the core CPLANE (ciliogenesis and planar polarity effectors) complex.

It localises to the membrane. The protein resides in the cell projection. The protein localises to the cilium. Functionally, involved in ciliogenesis. Involved in the establishment of cell polarity required for directional cell migration. Proposed to act in association with the CPLANE (ciliogenesis and planar polarity effectors) complex. Involved in recruitment of peripheral IFT-A proteins to basal bodies. The polypeptide is Ciliogenesis and planar polarity effector 1 (Mus musculus (Mouse)).